The following is a 404-amino-acid chain: Glucose-1-phosphate adenylyltransferase (404 aa).

Residues tyrosine 99, glycine 164, 179–180, and serine 197 contribute to the alpha-D-glucose 1-phosphate site; that span reads EK.

Belongs to the bacterial/plant glucose-1-phosphate adenylyltransferase family.

The catalysed reaction is alpha-D-glucose 1-phosphate + ATP + H(+) = ADP-alpha-D-glucose + diphosphate. The protein operates within capsule biogenesis; capsule polysaccharide biosynthesis. It participates in glycan biosynthesis; glycogen biosynthesis. Functionally, involved in the biosynthesis of ADP-glucose, a building block, required in the biosynthesis of maltose-1-phosphate (M1P) and in the elongation reactions to produce linear alpha-1,4-glucans. Catalyzes the reaction between ATP and alpha-D-glucose 1-phosphate (G1P) to produce pyrophosphate and ADP-Glc. This is Glucose-1-phosphate adenylyltransferase from Mycobacterium bovis (strain ATCC BAA-935 / AF2122/97).